A 398-amino-acid polypeptide reads, in one-letter code: Trans-2-enoyl-CoA reductase [NADH] (398 aa).

NAD(+)-binding positions include 47–52 (GASSGF), 74–75 (FE), 111–112 (DA), and 139–140 (LA). Y225 contributes to the substrate binding site. The active-site Proton donor is Y235. Residues K244 and 274–276 (IVT) each bind NAD(+).

Belongs to the TER reductase family. In terms of assembly, monomer.

It catalyses the reaction a 2,3-saturated acyl-CoA + NAD(+) = a (2E)-enoyl-CoA + NADH + H(+). The protein operates within lipid metabolism; fatty acid biosynthesis. In terms of biological role, involved in the fatty acid synthesis (FAS II). Catalyzes the reduction of a carbon-carbon double bond in an enoyl moiety that is covalently linked to a coenzyme A (CoA). The polypeptide is Trans-2-enoyl-CoA reductase [NADH] (Clostridium beijerinckii (strain ATCC 51743 / NCIMB 8052) (Clostridium acetobutylicum)).